A 397-amino-acid chain; its full sequence is Homocysteine-responsive endoplasmic reticulum-resident ubiquitin-like domain member 2 protein (397 aa).

Residues valine 10–arginine 89 enclose the Ubiquitin-like domain. 2 disordered regions span residues alanine 87 to glycine 166 and alanine 210 to proline 246. 2 stretches are compositionally biased toward low complexity: residues serine 88–serine 123 and alanine 210–alanine 220. A helical transmembrane segment spans residues phenylalanine 293–phenylalanine 313. A disordered region spans residues aspartate 344–leucine 373. Positions glutamate 345–aspartate 360 are enriched in acidic residues.

Its subcellular location is the membrane. In terms of biological role, could be involved in the unfolded protein response (UPR) pathway. The protein is Homocysteine-responsive endoplasmic reticulum-resident ubiquitin-like domain member 2 protein (herpud2) of Danio rerio (Zebrafish).